A 368-amino-acid polypeptide reads, in one-letter code: Cobalt-precorrin-5B C(1)-methyltransferase (368 aa).

This sequence belongs to the CbiD family.

It catalyses the reaction Co-precorrin-5B + S-adenosyl-L-methionine = Co-precorrin-6A + S-adenosyl-L-homocysteine. It functions in the pathway cofactor biosynthesis; adenosylcobalamin biosynthesis; cob(II)yrinate a,c-diamide from sirohydrochlorin (anaerobic route): step 6/10. Its function is as follows. Catalyzes the methylation of C-1 in cobalt-precorrin-5B to form cobalt-precorrin-6A. The chain is Cobalt-precorrin-5B C(1)-methyltransferase from Brucella canis (strain ATCC 23365 / NCTC 10854 / RM-666).